The primary structure comprises 310 residues: Putative S-adenosyl-L-methionine-dependent methyltransferase ML2640 (310 aa).

S-adenosyl-L-methionine contacts are provided by residues aspartate 132 and 161-162 (DL).

It belongs to the UPF0677 family.

Functionally, exhibits S-adenosyl-L-methionine-dependent methyltransferase activity. In Mycobacterium leprae (strain TN), this protein is Putative S-adenosyl-L-methionine-dependent methyltransferase ML2640.